The sequence spans 91 residues: Small ribosomal subunit protein uS19 (91 aa).

Belongs to the universal ribosomal protein uS19 family.

In terms of biological role, protein S19 forms a complex with S13 that binds strongly to the 16S ribosomal RNA. This is Small ribosomal subunit protein uS19 from Psychrobacter arcticus (strain DSM 17307 / VKM B-2377 / 273-4).